The sequence spans 611 residues: Putative type II restriction enzyme HgiDII (611 aa).

A compositionally biased stretch (basic and acidic residues) spans 355–364; sequence YPSNPKKEEV. Residues 355–434 are disordered; that stretch reads YPSNPKKEEV…PEPSPPPKQE (80 aa). The segment covering 381 to 409 has biased composition (low complexity); sequence TNASSDSSTATENASSDSSTATENASSET. 2 repeat units span residues 382 to 392 and 393 to 403. The segment at 382-403 is 2.5 X 11 AA tandem repeats; the sequence is NASSDSSTATENASSDSSTATE. The stretch at 404–409 is one 3; truncated repeat; the sequence is NASSET. Residues 410–425 show a composition bias toward acidic residues; sequence NDGEVEDNSFFDDDIP.

It catalyses the reaction Endonucleolytic cleavage of DNA to give specific double-stranded fragments with terminal 5'-phosphates.. According to REBASE this is a P subtype restriction enzyme that recognizes the double-stranded sequence 5'-GTCGAC-3' and cleaves after G-1. No restriction activity was detected upon overexpressing this protein in E.coli. This chain is Putative type II restriction enzyme HgiDII, found in Herpetosiphon aurantiacus (Herpetosiphon giganteus).